A 348-amino-acid chain; its full sequence is Dihydroorotase (348 aa).

The Zn(2+) site is built by His-17 and His-19. Residues 19 to 21 (HLR) and Asn-45 each bind substrate. Positions 103, 140, and 178 each coordinate Zn(2+). The residue at position 103 (Lys-103) is an N6-carboxylysine. His-140 provides a ligand contact to substrate. Leu-223 contacts substrate. Zn(2+) is bound at residue Asp-251. Asp-251 is a catalytic residue. Residues His-255 and Ala-267 each contribute to the substrate site.

It belongs to the metallo-dependent hydrolases superfamily. DHOase family. Class II DHOase subfamily. Homodimer. Zn(2+) is required as a cofactor.

It catalyses the reaction (S)-dihydroorotate + H2O = N-carbamoyl-L-aspartate + H(+). The protein operates within pyrimidine metabolism; UMP biosynthesis via de novo pathway; (S)-dihydroorotate from bicarbonate: step 3/3. Its function is as follows. Catalyzes the reversible cyclization of carbamoyl aspartate to dihydroorotate. In Salmonella newport (strain SL254), this protein is Dihydroorotase.